A 67-amino-acid polypeptide reads, in one-letter code: MARITVEDCLKTIPNRFELVLAATYRARQLVQGHSPRVESRDKATVVALREVAAGVTDRDMLTKVPL.

It belongs to the RNA polymerase subunit omega family. The RNAP catalytic core consists of 2 alpha, 1 beta, 1 beta' and 1 omega subunit. When a sigma factor is associated with the core the holoenzyme is formed, which can initiate transcription.

It catalyses the reaction RNA(n) + a ribonucleoside 5'-triphosphate = RNA(n+1) + diphosphate. Promotes RNA polymerase assembly. Latches the N- and C-terminal regions of the beta' subunit thereby facilitating its interaction with the beta and alpha subunits. The sequence is that of DNA-directed RNA polymerase subunit omega from Polynucleobacter asymbioticus (strain DSM 18221 / CIP 109841 / QLW-P1DMWA-1) (Polynucleobacter necessarius subsp. asymbioticus).